Consider the following 355-residue polypeptide: Magnesium-chelatase subunit ChlI (355 aa).

47-54 (GDRGTGKS) is an ATP binding site.

This sequence belongs to the Mg-chelatase subunits D/I family.

Its subcellular location is the plastid. It is found in the chloroplast. It catalyses the reaction protoporphyrin IX + Mg(2+) + ATP + H2O = Mg-protoporphyrin IX + ADP + phosphate + 3 H(+). It functions in the pathway porphyrin-containing compound metabolism; chlorophyll biosynthesis. In terms of biological role, involved in chlorophyll biosynthesis; introduces a magnesium ion into protoporphyrin IX to yield Mg-protoporphyrin IX. In Pyropia yezoensis (Susabi-nori), this protein is Magnesium-chelatase subunit ChlI (chlI).